A 566-amino-acid chain; its full sequence is E3 ubiquitin-protein ligase RNF220 (566 aa).

K277 is covalently cross-linked (Glycyl lysine isopeptide (Lys-Gly) (interchain with G-Cter in SUMO2)). The disordered stretch occupies residues K277–H297. S390 carries the phosphoserine modification. Residues E485–K513 adopt a coiled-coil conformation. The segment at C514–S522 is required for targeting to the cytoplasm. The RING-type zinc-finger motif lies at C514–N553.

Interacts with SIN3B. Interacts with CTNNB1 (via Armadillo repeats 2-8). Interacts with USP7 (via MATH domain). Auto-ubiquitinated; leads to proteasomal degradation.

The protein localises to the cytoplasm. It is found in the nucleus. The enzyme catalyses S-ubiquitinyl-[E2 ubiquitin-conjugating enzyme]-L-cysteine + [acceptor protein]-L-lysine = [E2 ubiquitin-conjugating enzyme]-L-cysteine + N(6)-ubiquitinyl-[acceptor protein]-L-lysine.. It functions in the pathway protein modification; protein ubiquitination. Functionally, E3 ubiquitin-protein ligase that promotes the ubiquitination and proteasomal degradation of SIN3B. Independently of its E3 ligase activity, acts as a CTNNB1 stabilizer through USP7-mediated deubiquitination of CTNNB1 and promotes Wnt signaling. Plays a critical role in the regulation of nuclear lamina. The sequence is that of E3 ubiquitin-protein ligase RNF220 (RNF220) from Macaca fascicularis (Crab-eating macaque).